Consider the following 128-residue polypeptide: Small ribosomal subunit protein uS11 (128 aa).

This sequence belongs to the universal ribosomal protein uS11 family. As to quaternary structure, part of the 30S ribosomal subunit. Interacts with proteins S7 and S18. Binds to IF-3.

Its function is as follows. Located on the platform of the 30S subunit, it bridges several disparate RNA helices of the 16S rRNA. Forms part of the Shine-Dalgarno cleft in the 70S ribosome. The chain is Small ribosomal subunit protein uS11 from Vesicomyosocius okutanii subsp. Calyptogena okutanii (strain HA).